Reading from the N-terminus, the 162-residue chain is Caveolin-2 (162 aa).

Topologically, residues 1-86 (MGLETEKADV…FEISKYVIYK (86 aa)) are cytoplasmic. At Tyr19 the chain carries Phosphotyrosine; by SRC. Phosphoserine occurs at positions 20 and 23. Residue Tyr27 is modified to Phosphotyrosine; by SRC. Residue Ser36 is modified to Phosphoserine. The helical intramembrane region spans 87–107 (FLTLFLAIPLAFAAGILFATL). Over 108–162 (SCLHIWIIMPFVKTCLMVLPSVQTIWKSITDVVIAPLCTSVGRSFSSVSLQLSHD) the chain is Cytoplasmic.

The protein belongs to the caveolin family. Monomer or homodimer. Interacts with CAV1; the interaction forms a stable heterooligomeric complex that is required for targeting to lipid rafts and for caveolae formation. Tyrosine phosphorylated forms do not form heterooligomers with the Tyr-19-phosphorylated form existing as a monomer or dimer, and the Tyr-27-form as a monomer only. Interacts (tyrosine phosphorylated form) with the SH2 domain-containing proteins, RASA1, NCK1 and SRC. Interacts (tyrosine phosphorylated form) with INSR, the interaction (Tyr-27-phosphorylated form) is increased on insulin stimulation. Interacts (Tyr-19 phosphorylated form) with MAPK1 (phosphorylated form); the interaction, promoted by insulin, leads to nuclear location and MAPK1 activation. Interacts with STAT3; the interaction is increased on insulin-induced tyrosine phosphorylation leading to STAT activation. Phosphorylated on serine and tyrosine residues. CAV1 promotes phosphorylation on Ser-23 which then targets the complex to the plasma membrane, lipid rafts and caveolae. Phosphorylation on Ser-36 appears to modulate mitosis in endothelial cells. Phosphorylation on both Tyr-19 and Tyr-27 is required for insulin-induced 'Ser-727' phosphorylation of STAT3 and its activation. Phosphorylation on Tyr-19 is required for insulin-induced phosphorylation of MAPK1 and DNA binding of STAT3. Tyrosine phosphorylation is induced by both EGF and insulin (By. similarity).

The protein localises to the nucleus. It is found in the cytoplasm. Its subcellular location is the golgi apparatus membrane. It localises to the cell membrane. The protein resides in the membrane. The protein localises to the caveola. May act as a scaffolding protein within caveolar membranes. Interacts directly with G-protein alpha subunits and can functionally regulate their activity. Acts as an accessory protein in conjunction with CAV1 in targeting to lipid rafts and driving caveolae formation. The Ser-36 phosphorylated form has a role in modulating mitosis in endothelial cells. Positive regulator of cellular mitogenesis of the MAPK signaling pathway. Required for the insulin-stimulated nuclear translocation and activation of MAPK1 and STAT3, and the subsequent regulation of cell cycle progression. The protein is Caveolin-2 (CAV2) of Neofelis nebulosa (Clouded leopard).